A 573-amino-acid polypeptide reads, in one-letter code: MRLLRPSWAGLLRGRHHQHQRHHRRLLLTTSRGSNGEREEQQHSQWSSPGSRSEQLFYAAFWAGGLTLGYHWLTDKKNHVLLEGQKVASEEELEATARLWHVTNRRELPTYRAEEVEQHNSVEKRIWVTYGLGVYDVTDFVENHPGGDKILMAAGSAIDPFWGIYQQHNTLEVLELLEGFRIGNLEGLVVTNVDDELGSPWSQEPQRHALLKPASKRPFNAEPPIGLLAEQFYTPNELFYVRNHLPVPVINPEDYELEIEGGAKDKTLTLDGIKALPKHSVTAAIMCGGNRRSEMTKVKAVKGLSWGAGAVGNAKWSGARLCDILREQGVQPDETKHVIFEGADLDPTSHPYGASIPLAKALDPRGDVILAYEMNDEPLSRDHGFPIRVIVPGTVGARNVKWLTRIVVADKESDSHWQQNDYKGFSPSTDWDTVDFSKSDAIQAMPVTSAICTPQPGARVKVDDDEGHITVRGYAWSGGGRKIVRVDLTNDEGVSWHVAELEQEEMPDGRHYGWSLWTARLPVSEAQRRAGDVEIWAKAVDSAYNVQPEKFEHIWNLRGVLANAYHKVKVKII.

A mitochondrion-targeting transit peptide spans 1–34 (MRLLRPSWAGLLRGRHHQHQRHHRRLLLTTSRGS). Residues 14 to 26 (GRHHQHQRHHRRL) are compositionally biased toward basic residues. The interval 14 to 50 (GRHHQHQRHHRRLLLTTSRGSNGEREEQQHSQWSSPG) is disordered. The 79-residue stretch at 108–186 (LPTYRAEEVE…LEGFRIGNLE (79 aa)) folds into the Cytochrome b5 heme-binding domain. Positions 144 and 168 each coordinate heme b. Residues 190–199 (VTNVDDELGS) are hinge. Positions 200–423 (PWSQEPQRHA…DSHWQQNDYK (224 aa)) are moco domain. Mo-molybdopterin is bound by residues 240–244 (YVRNH), cysteine 287, aspartate 344, histidine 383, arginine 388, and 399–401 (NVK). The tract at residues 424–567 (GFSPSTDWDT…RGVLANAYHK (144 aa)) is homodimerization.

Requires heme b as cofactor. Mo-molybdopterin serves as cofactor. Expressed in the ensheathing glia with relatively weak expression in the CNS cortex (at protein level).

Its subcellular location is the mitochondrion intermembrane space. The enzyme catalyses sulfite + O2 + H2O = sulfate + H2O2. The protein operates within energy metabolism; sulfur metabolism. Its function is as follows. Required in ensheathing glial cells for normal larval locomotion. Oxidizes sulfite which is required to maintain glutamate homeostasis and as a consequence, neuronal network function. The sequence is that of Sulfite oxidase, mitochondrial from Drosophila melanogaster (Fruit fly).